Consider the following 594-residue polypeptide: Neuronal PAS domain-containing protein 1 (594 aa).

Residues 45–98 (QRKEKSRNAARWRRGKENLEFFELAKLLPLPGAISSQLDKASIVRLSVTYLRLR) enclose the bHLH domain. The PAS 1 domain occupies 135-205 (EQHLGGHILQ…EQLGLRAASI (71 aa)). A disordered region spans residues 206–237 (GPPTPPSVSSSSSSSSSSLVDTPEIEASPTEA). Residues 212–223 (SVSSSSSSSSSS) are compositionally biased toward low complexity. Residues 294 to 360 (APLAELPLHG…IRQSHLDLLD (67 aa)) enclose the PAS 2 domain. In terms of domain architecture, PAC spans 366-409 (TGYYRWLQRAGGFVWLQSVATVAGNGKSTGEHHVLWVSHVLSNA). A disordered region spans residues 427–498 (QEEPSRPGPE…DPPAPPRPEF (72 aa)). The span at 453–480 (DQDKDKDPQARGKRIKVEASPKEARGSE) shows a compositional bias: basic and acidic residues.

In terms of assembly, efficient DNA binding requires dimerization with another bHLH protein. Interacts with ARNT; forms a heterodimer that binds core DNA sequence 5'-[AG]CGTG-3' within the hypoxia response element (HRE) leading to a transcriptional repressor on its target gene TH. As to expression, expressed in brain in inhibitory interneurons. Also found in spinal cord.

The protein resides in the nucleus. Its function is as follows. May control regulatory pathways relevant to schizophrenia and to psychotic illness. May play a role in late central nervous system development by modulating EPO expression in response to cellular oxygen level. Forms a heterodimer that binds core DNA sequence 5'-TACGTG-3' within the hypoxia response element (HRE) leading to transcriptional repression on its target gene TH. The sequence is that of Neuronal PAS domain-containing protein 1 (Npas1) from Mus musculus (Mouse).